The chain runs to 22 residues: Motilin (22 aa).

Residues 1–11 (FVPFFTQSDIQ) are compositionally biased toward polar residues. Positions 1 to 22 (FVPFFTQSDIQKMQEKERNKGQ) are disordered. The segment covering 12-22 (KMQEKERNKGQ) has biased composition (basic and acidic residues).

It belongs to the motilin family.

It localises to the secreted. Functionally, plays an important role in the regulation of interdigestive gastrointestinal motility and indirectly causes rhythmic contraction of duodenal and colonic smooth muscle. This chain is Motilin (MLN), found in Gallus gallus (Chicken).